A 664-amino-acid chain; its full sequence is Sodium/glucose cotransporter 1 (664 aa).

At 1–24 (MDSSTWSPPATATAEPLQAYERIR) the chain is on the extracellular side. Residues 25–47 (NAADISVIVIYFVVVMAVGLWAM) traverse the membrane as a helical segment. The Cytoplasmic segment spans residues 48–66 (FSTNRGTVGGFFLAGRSMV). The helical transmembrane segment at 67–90 (WWPIGASLFASNIGSGHFVGLAGT) threads the bilayer. Residues 91-95 (GAAAG) lie on the Extracellular side of the membrane. The helical transmembrane segment at 96–117 (IATGGFEWNALILVVLLGWVFV) threads the bilayer. The Cytoplasmic portion of the chain corresponds to 118–139 (PIYIKAGVVTMPEYLRKRFGGQ). Residues 140 to 169 (RIQVYLSVLSLVLYIFTKISADIFSGAIFI) traverse the membrane as a helical segment. The Extracellular segment spans residues 170–176 (NLALGLD). The chain crosses the membrane as a helical span at residues 177 to 193 (LYLAIFILLAITALYTI). Over 194–202 (TGGLAAVIY) the chain is Cytoplasmic. Residues 203–221 (TDTLQTVIMLLGSFILTGF) form a helical membrane-spanning segment. The Extracellular portion of the chain corresponds to 222 to 275 (AFHEVGGYSAFVTKYMNAIPTVTSYGNTTVKKECYTPRADSFHIFRDPLKGDLP). A glycan (N-linked (GlcNAc...) asparagine) is linked at asparagine 248. Intrachain disulfides connect cysteine 255/cysteine 511, cysteine 255/cysteine 610, cysteine 345/cysteine 351, cysteine 355/cysteine 361, and cysteine 517/cysteine 522. A helical membrane pass occupies residues 276–295 (WPGLIFGLTIISLWYWCTDQ). Residues 296-309 (VIVQRCLSAKNMSH) lie on the Cytoplasmic side of the membrane. The helical transmembrane segment at 310-331 (VKAGCIMCGYMKLLPMFLMVMP) threads the bilayer. At 332 to 375 (GMISRILFTEKVACTVPSECEKYCGTKVGCTNIAYPTLVVELMP) the chain is on the extracellular side. A helical membrane pass occupies residues 376–406 (NGLRGLMLSVMLASLMSSLTSIFNSASTLFT). Topologically, residues 407-422 (MDIYTKIRKKASEKEL) are cytoplasmic. A helical membrane pass occupies residues 423-444 (MIAGRLFMLVLIGVSIAWVPIV). At 445–451 (QSAQSGQ) the chain is on the extracellular side. The chain crosses the membrane as a helical span at residues 452–477 (LFDYIQSITSYLGPPIAAVFLLAIFC). Residue glutamine 457 participates in D-glucose binding. Residues 478–481 (KRVN) lie on the Cytoplasmic side of the membrane. The helical transmembrane segment at 482 to 504 (EPGAFWGLIIGFLIGVSRMITEF) threads the bilayer. The Extracellular segment spans residues 505-525 (AYGTGSCMEPSNCPTIICGVH). Residues 526-547 (YLYFAIILFVITIIVILAISLF) form a helical membrane-spanning segment. Residues 548 to 644 (TKPIADVHLY…TSEKRLWRMV (97 aa)) lie on the Cytoplasmic side of the membrane. Residues 645–662 (VNINGIILLAVAVFCHAY) form a helical membrane-spanning segment. At 663–664 (FA) the chain is on the extracellular side.

This sequence belongs to the sodium:solute symporter (SSF) (TC 2.A.21) family. Post-translationally, N-glycosylation is not necessary for the cotransporter function.

Its subcellular location is the apical cell membrane. It catalyses the reaction D-glucose(out) + 2 Na(+)(out) = D-glucose(in) + 2 Na(+)(in). The enzyme catalyses D-galactose(out) + 2 Na(+)(out) = D-galactose(in) + 2 Na(+)(in). Its activity is regulated as follows. Enhanced by the interaction with PDZK1IP1/MAP17; but unlike SLC5A2/SGLT2, PDZK1IP1 is not essential for SLC5A1 transporter activity. Possibly modulated by cholesterol binding. Its function is as follows. Electrogenic Na(+)-coupled sugar symporter that actively transports D-glucose or D-galactose at the plasma membrane, with a Na(+) to sugar coupling ratio of 2:1. Transporter activity is driven by a transmembrane Na(+) electrochemical gradient set by the Na(+)/K(+) pump. Has a primary role in the transport of dietary monosaccharides from enterocytes to blood. Responsible for the absorption of D-glucose or D-galactose across the apical brush-border membrane of enterocytes, whereas basolateral exit is provided by GLUT2. Additionally, functions as a D-glucose sensor in enteroendocrine cells, triggering the secretion of the incretins GCG and GIP that control food intake and energy homeostasis. Together with SGLT2, functions in reabsorption of D-glucose from glomerular filtrate, playing a nonredundant role in the S3 segment of the proximal tubules. Transports D-glucose into endometrial epithelial cells, controlling glycogen synthesis and nutritional support for the embryo as well as the decidual transformation of endometrium prior to conception. Acts as a water channel enabling passive water transport in response to the osmotic gradient created upon sugar and Na(+) uptake. Has high water conductivity comparable to aquaporins and therefore is expected to play an important role in transepithelial water permeability, especially in the small intestine. This chain is Sodium/glucose cotransporter 1 (SLC5A1), found in Ovis aries (Sheep).